The primary structure comprises 226 residues: Deoxyribose-phosphate aldolase (226 aa).

The active-site Proton donor/acceptor is D84. K146 serves as the catalytic Schiff-base intermediate with acetaldehyde. K188 (proton donor/acceptor) is an active-site residue.

It belongs to the DeoC/FbaB aldolase family. DeoC type 1 subfamily. Homodimer.

The protein localises to the cytoplasm. It carries out the reaction 2-deoxy-D-ribose 5-phosphate = D-glyceraldehyde 3-phosphate + acetaldehyde. Its pathway is carbohydrate degradation; 2-deoxy-D-ribose 1-phosphate degradation; D-glyceraldehyde 3-phosphate and acetaldehyde from 2-deoxy-alpha-D-ribose 1-phosphate: step 2/2. Its function is as follows. Catalyzes a reversible aldol reaction between acetaldehyde and D-glyceraldehyde 3-phosphate to generate 2-deoxy-D-ribose 5-phosphate. The protein is Deoxyribose-phosphate aldolase of Pyrobaculum aerophilum (strain ATCC 51768 / DSM 7523 / JCM 9630 / CIP 104966 / NBRC 100827 / IM2).